Reading from the N-terminus, the 166-residue chain is Small ribosomal subunit protein uS4 (166 aa).

An S4 RNA-binding domain is found at 103–165; that stretch reads RRLQTVVYKK…PTSPYFKKAQ (63 aa).

Belongs to the universal ribosomal protein uS4 family. Part of the 30S ribosomal subunit. Contacts protein S5. The interaction surface between S4 and S5 is involved in control of translational fidelity.

Its function is as follows. One of the primary rRNA binding proteins, it binds directly to 16S rRNA where it nucleates assembly of the body of the 30S subunit. With S5 and S12 plays an important role in translational accuracy. The protein is Small ribosomal subunit protein uS4 of Ignicoccus hospitalis (strain KIN4/I / DSM 18386 / JCM 14125).